The sequence spans 193 residues: Holliday junction branch migration complex subunit RuvA (193 aa).

Residues 1–64 form a domain I region; the sequence is MIGRIQGTLV…EDAQQLFGFA (64 aa). The segment at 65–139 is domain II; it reads TETEREAFRQ…GKLAPDLGVA (75 aa). Positions 139 to 143 are flexible linker; sequence AGGKP. Residues 144–193 form a domain III region; the sequence is QAIETSSEVLQALLALGYSEKEALLALKQIPADTSISDGIRMGLKYLSKA.

Belongs to the RuvA family. Homotetramer. Forms an RuvA(8)-RuvB(12)-Holliday junction (HJ) complex. HJ DNA is sandwiched between 2 RuvA tetramers; dsDNA enters through RuvA and exits via RuvB. An RuvB hexamer assembles on each DNA strand where it exits the tetramer. Each RuvB hexamer is contacted by two RuvA subunits (via domain III) on 2 adjacent RuvB subunits; this complex drives branch migration. In the full resolvosome a probable DNA-RuvA(4)-RuvB(12)-RuvC(2) complex forms which resolves the HJ.

Its subcellular location is the cytoplasm. In terms of biological role, the RuvA-RuvB-RuvC complex processes Holliday junction (HJ) DNA during genetic recombination and DNA repair, while the RuvA-RuvB complex plays an important role in the rescue of blocked DNA replication forks via replication fork reversal (RFR). RuvA specifically binds to HJ cruciform DNA, conferring on it an open structure. The RuvB hexamer acts as an ATP-dependent pump, pulling dsDNA into and through the RuvAB complex. HJ branch migration allows RuvC to scan DNA until it finds its consensus sequence, where it cleaves and resolves the cruciform DNA. This Polynucleobacter necessarius subsp. necessarius (strain STIR1) protein is Holliday junction branch migration complex subunit RuvA.